Consider the following 910-residue polypeptide: Eukaryotic translation initiation factor 3 subunit C (910 aa).

The segment at 1 to 21 is disordered; it reads MSRFFANGSESESESSEEEIQ. Residues 11-20 are compositionally biased toward acidic residues; that stretch reads SESESSEEEI. Residues Ser34, Ser165, Ser176, and Ser185 each carry the phosphoserine modification. The tract at residues 157–279 is disordered; sequence FREAPDQESE…IRKRAEDDED (123 aa). Over residues 162 to 186 the composition is skewed to acidic residues; that stretch reads DQESEAEDEVVALESDGGDAGDDSD. Over residues 194–207 the composition is skewed to low complexity; it reads AVPKAVKSAPAKAA. Over residues 209-235 the composition is skewed to acidic residues; that stretch reads ADDDDSDDSIDWDSDSESETESSDDEN. Residues 240–268 are compositionally biased toward basic and acidic residues; sequence MRERFLKRTTEKEEKDDDKRKDKRKEQKT. A PCI domain is found at 639–815; it reads FHMHINLELL…ETVGMHRSEP (177 aa). The segment at 847–910 is disordered; that stretch reads FFQRGNMGNR…QQQVQTIDEE (64 aa). Positions 862–874 are enriched in low complexity; that stretch reads NRNQNNQGGNWLG. Residues 882–891 show a composition bias toward basic residues; sequence RNRNQRGHHK. The segment covering 895 to 910 has biased composition (low complexity); it reads DRQQQQQQQVQTIDEE.

The protein belongs to the eIF-3 subunit C family. In terms of assembly, component of the eukaryotic translation initiation factor 3 (eIF-3) complex. The eIF-3 complex interacts with pix.

Its subcellular location is the cytoplasm. Functionally, component of the eukaryotic translation initiation factor 3 (eIF-3) complex, which is involved in protein synthesis of a specialized repertoire of mRNAs and, together with other initiation factors, stimulates binding of mRNA and methionyl-tRNAi to the 40S ribosome. The eIF-3 complex specifically targets and initiates translation of a subset of mRNAs involved in cell proliferation. This is Eukaryotic translation initiation factor 3 subunit C from Drosophila melanogaster (Fruit fly).